A 276-amino-acid chain; its full sequence is Ribosomal RNA small subunit methyltransferase A (276 aa).

6 residues coordinate S-adenosyl-L-methionine: Asn-27, Leu-29, Gly-54, Glu-75, Asp-101, and Asn-122.

It belongs to the class I-like SAM-binding methyltransferase superfamily. rRNA adenine N(6)-methyltransferase family. RsmA subfamily.

The protein resides in the cytoplasm. It carries out the reaction adenosine(1518)/adenosine(1519) in 16S rRNA + 4 S-adenosyl-L-methionine = N(6)-dimethyladenosine(1518)/N(6)-dimethyladenosine(1519) in 16S rRNA + 4 S-adenosyl-L-homocysteine + 4 H(+). Specifically dimethylates two adjacent adenosines (A1518 and A1519) in the loop of a conserved hairpin near the 3'-end of 16S rRNA in the 30S particle. May play a critical role in biogenesis of 30S subunits. In Brucella abortus (strain S19), this protein is Ribosomal RNA small subunit methyltransferase A.